We begin with the raw amino-acid sequence, 155 residues long: Small ribosomal subunit protein uS7 (155 aa).

It belongs to the universal ribosomal protein uS7 family. In terms of assembly, part of the 30S ribosomal subunit. Contacts proteins S9 and S11.

Functionally, one of the primary rRNA binding proteins, it binds directly to 16S rRNA where it nucleates assembly of the head domain of the 30S subunit. Is located at the subunit interface close to the decoding center, probably blocks exit of the E-site tRNA. The polypeptide is Small ribosomal subunit protein uS7 (Mesoplasma florum (strain ATCC 33453 / NBRC 100688 / NCTC 11704 / L1) (Acholeplasma florum)).